A 62-amino-acid polypeptide reads, in one-letter code: Large ribosomal subunit protein uL29 (62 aa).

This sequence belongs to the universal ribosomal protein uL29 family.

This is Large ribosomal subunit protein uL29 from Enterococcus faecalis (strain ATCC 700802 / V583).